The chain runs to 594 residues: Solute carrier family 22 member 14 (594 aa).

Residues methionine 1–valine 70 are Cytoplasmic-facing. The helical transmembrane segment at alanine 71 to phenylalanine 91 threads the bilayer. The Extracellular portion of the chain corresponds to threonine 92 to aspartate 184. Asparagine 99, asparagine 117, asparagine 125, and asparagine 150 each carry an N-linked (GlcNAc...) asparagine glycan. The helical transmembrane segment at threonine 185–threonine 205 threads the bilayer. The Cytoplasmic portion of the chain corresponds to aspartate 206–arginine 210. The chain crosses the membrane as a helical span at residues tyrosine 211–methionine 231. At asparagine 232–histidine 235 the chain is on the extracellular side. Residues leucine 236–isoleucine 256 form a helical membrane-spanning segment. The Cytoplasmic portion of the chain corresponds to serine 257–histidine 270. A helical membrane pass occupies residues alanine 271–tyrosine 291. Over serine 292–glutamine 297 the chain is Extracellular. The chain crosses the membrane as a helical span at residues leucine 298 to proline 318. Residues glutamate 319 to lysine 379 are Cytoplasmic-facing. The helical transmembrane segment at valine 380–leucine 400 threads the bilayer. Residues arginine 401–serine 408 are Extracellular-facing. A helical membrane pass occupies residues valine 409–leucine 431. At glutamine 432–lysine 437 the chain is on the cytoplasmic side. The helical transmembrane segment at tryptophan 438 to proline 458 threads the bilayer. The Extracellular segment spans residues glutamate 459–glutamate 488. The chain crosses the membrane as a helical span at residues phenylalanine 489–valine 509. The Cytoplasmic segment spans residues leucine 510 to alanine 512. Residues threonine 513 to isoleucine 533 traverse the membrane as a helical segment. The Extracellular portion of the chain corresponds to serine 534–serine 538. Residues leucine 539–leucine 559 form a helical membrane-spanning segment. The Cytoplasmic segment spans residues proline 560–valine 594. Residues proline 566–valine 594 form a disordered region. Polar residues predominate over residues leucine 567 to arginine 578. Residues lysine 580–valine 594 show a composition bias toward basic and acidic residues.

This sequence belongs to the major facilitator (TC 2.A.1) superfamily. Organic cation transporter (TC 2.A.1.19) family. Ubiquitous.

Its subcellular location is the mitochondrion inner membrane. It is found in the cell projection. It localises to the cilium. The protein localises to the flagellum membrane. The catalysed reaction is riboflavin(in) = riboflavin(out). Riboflavin transporter localized at the inner mitochondrial membrane of the spermatozoa midpiece, which is required for male fertility. SLC22A14-mediated riboflavin transport is essential for spermatozoa energy generation and motility: riboflavin is the precursor of FMN and FAD, which are coenzymes of many enzymes in the TCA cycle (the citric acid cycle) in mitochondria. Required for sperm motility and normal sperm flagellar structure. The sequence is that of Solute carrier family 22 member 14 from Homo sapiens (Human).